A 715-amino-acid chain; its full sequence is Phosphatidylinositol 4-phosphate 5-kinase 6 (715 aa).

The segment covering 1–13 (MSVAHADDADDYS) has biased composition (basic and acidic residues). Positions 1-21 (MSVAHADDADDYSRPTGESYH) are disordered. 8 MORN repeats span residues 32 to 54 (YTGQ…DGCM), 55 to 77 (YVGD…SGAT), 78 to 100 (YEGD…SGDL), 101 to 123 (YRGS…NGDC), 124 to 146 (YDGE…NENH), 147 to 169 (YIGQ…NGNR), 170 to 192 (YDGS…DGSF), and 193 to 214 (YVGV…STSS). A disordered region spans residues 253–306 (GASEQSSSGNRTKNSERPRRRSVDGRVSNGEMELRSNGSGYLQVDDNAESTRSS). Positions 255-264 (SEQSSSGNRT) are enriched in polar residues. Residues 265–276 (KNSERPRRRSVD) are compositionally biased toward basic and acidic residues. The PIPK domain maps to 321 to 711 (TISKGHKNYE…RFRDFIFRVF (391 aa)). The activation loop stretch occupies residues 671–692 (YDISKKLEHAYKSMQYDPTSIS).

It catalyses the reaction a 1,2-diacyl-sn-glycero-3-phospho-(1D-myo-inositol 4-phosphate) + ATP = a 1,2-diacyl-sn-glycero-3-phospho-(1D-myo-inositol-4,5-bisphosphate) + ADP + H(+). This Arabidopsis thaliana (Mouse-ear cress) protein is Phosphatidylinositol 4-phosphate 5-kinase 6 (PIP5K6).